Here is a 120-residue protein sequence, read N- to C-terminus: Meiosis expressed gene 1 protein homolog (120 aa).

Residues 1 to 45 form a disordered region; sequence MDGLAIGGVSAPMTAERPQQVKKQLSRRTPDAADGRKPTRMERAK. Residues 28 to 45 show a composition bias toward basic and acidic residues; the sequence is RTPDAADGRKPTRMERAK.

It belongs to the MEIG1 family.

This Oxyrrhis marina (Dinoflagellate) protein is Meiosis expressed gene 1 protein homolog.